Consider the following 243-residue polypeptide: Interleukin-27 subunit alpha (243 aa).

The N-terminal stretch at 1–28 is a signal peptide; it reads MGQTAGDLGWRLSLLLLPLLLVQAGVWG.

This sequence belongs to the IL-6 superfamily. As to quaternary structure, heterodimer with EBI3; not disulfide-linked. This heterodimer is known as interleukin IL-27. Post-translationally, O-glycosylated. As to expression, expressed in monocytes and in placenta.

It is found in the secreted. Associates with EBI3 to form the IL-27 interleukin, a heterodimeric cytokine which functions in innate immunity. IL-27 has pro- and anti-inflammatory properties, that can regulate T-helper cell development, suppress T-cell proliferation, stimulate cytotoxic T-cell activity, induce isotype switching in B-cells, and that has diverse effects on innate immune cells. Among its target cells are CD4 T-helper cells which can differentiate in type 1 effector cells (TH1), type 2 effector cells (TH2) and IL17 producing helper T-cells (TH17). It drives rapid clonal expansion of naive but not memory CD4 T-cells. It also strongly synergizes with IL-12 to trigger interferon-gamma/IFN-gamma production of naive CD4 T-cells, binds to the cytokine receptor WSX-1/TCCR which appears to be required but not sufficient for IL-27-mediated signal transduction. IL-27 potentiate the early phase of TH1 response and suppress TH2 and TH17 differentiation. It induces the differentiation of TH1 cells via two distinct pathways, p38 MAPK/TBX21- and ICAM1/ITGAL/ERK-dependent pathways. It also induces STAT1, STAT3, STAT4 and STAT5 phosphorylation and activates TBX21/T-Bet via STAT1 with resulting IL12RB2 up-regulation, an event crucial to TH1 cell commitment. It suppresses the expression of GATA3, the inhibitor TH1 cells development. In CD8 T-cells, it activates STATs as well as GZMB. IL-27 reveals to be a potent inhibitor of TH17 cell development and of IL-17 production. Indeed IL27 alone is also able to inhibit the production of IL17 by CD4 and CD8 T-cells. While IL-27 suppressed the development of pro-inflammatory Th17 cells via STAT1, it inhibits the development of anti-inflammatory inducible regulatory T-cells, iTreg, independently of STAT1. IL-27 also has an effect on cytokine production, it suppresses pro-inflammatory cytokine production such as IL2, IL4, IL5 and IL6 and activates suppressors of cytokine signaling such as SOCS1 and SOCS3. Apart from suppression of cytokine production, IL-27 also antagonizes the effects of some cytokines such as IL6 through direct effects on T-cells. Another important role of IL-27 is its antitumor activity as well as its antiangiogenic activity with activation of production of antiangiogenic chemokines such as IP-10/CXCL10 and MIG/CXCL9. In vein endothelial cells, it induces IRF1/interferon regulatory factor 1 and increase the expression of MHC class II transactivator/CIITA with resulting up-regulation of major histocompatibility complex class II. IL-27 also demonstrates antiviral activity with inhibitory properties on HIV-1 replication. The sequence is that of Interleukin-27 subunit alpha (IL27) from Homo sapiens (Human).